The sequence spans 79 residues: Small ribosomal subunit protein bS16c (79 aa).

Belongs to the bacterial ribosomal protein bS16 family.

It is found in the plastid. The protein localises to the chloroplast. The sequence is that of Small ribosomal subunit protein bS16c from Staurastrum punctulatum (Green alga).